Consider the following 124-residue polypeptide: Acidic phospholipase A2 BA1 (124 aa).

7 disulfide bridges follow: Cys-26–Cys-116, Cys-28–Cys-44, Cys-43–Cys-95, Cys-49–Cys-124, Cys-50–Cys-88, Cys-57–Cys-81, and Cys-75–Cys-86. Residues Tyr-27, Gly-29, and Gly-31 each contribute to the Ca(2+) site. The active site involves His-47. Asp-48 is a Ca(2+) binding site. Residue Asp-89 is part of the active site.

The protein belongs to the phospholipase A2 family. Group II subfamily. D49 sub-subfamily. The cofactor is Ca(2+). As to expression, expressed by the venom gland.

It is found in the secreted. The catalysed reaction is a 1,2-diacyl-sn-glycero-3-phosphocholine + H2O = a 1-acyl-sn-glycero-3-phosphocholine + a fatty acid + H(+). In terms of biological role, PLA2 catalyzes the calcium-dependent hydrolysis of the 2-acyl groups in 3-sn-phosphoglycerides. This chain is Acidic phospholipase A2 BA1, found in Gloydius halys (Chinese water mocassin).